Consider the following 810-residue polypeptide: Probable dehydratase YbiW (810 aa).

In terms of domain architecture, PFL spans 11-682; it reads DRIKAHKNAL…QTMATPDGRK (672 aa). The segment at 677–699 is disordered; sequence TPDGRKAHTPLAEGASPASGTDH. The region spanning 689 to 810 is the Glycine radical domain; that stretch reads EGASPASGTD…DIIARTEHML (122 aa). A Glycine radical modification is found at G786.

The protein belongs to the glycyl radical enzyme (GRE) family.

In terms of biological role, probably shows dehydratase activity. This Escherichia coli (strain K12) protein is Probable dehydratase YbiW (ybiW).